The primary structure comprises 278 residues: Elongation factor Ts (278 aa).

An involved in Mg(2+) ion dislocation from EF-Tu region spans residues 82–85 (TEPV).

This sequence belongs to the EF-Ts family.

The protein localises to the cytoplasm. Its function is as follows. Associates with the EF-Tu.GDP complex and induces the exchange of GDP to GTP. It remains bound to the aminoacyl-tRNA.EF-Tu.GTP complex up to the GTP hydrolysis stage on the ribosome. The polypeptide is Elongation factor Ts (Cytophaga hutchinsonii (strain ATCC 33406 / DSM 1761 / CIP 103989 / NBRC 15051 / NCIMB 9469 / D465)).